A 159-amino-acid chain; its full sequence is uncharacterized protein (159 aa).

Residues 1–139 (MSRRAPGSRL…RKSQERSMSY (139 aa)) are disordered. Residues 9–31 (RLSSGGTNYSRSWNDWQPRTDSA) are compositionally biased toward polar residues. Positions 65–82 (QRHDDTRVHADIQNDEKG) are enriched in basic and acidic residues. Positions 105–119 (RVNNVTSPEFTSVQH) are enriched in polar residues. A compositionally biased stretch (basic and acidic residues) spans 125-134 (ATKDMRKSQE).

This is an uncharacterized protein from Homo sapiens (Human).